The primary structure comprises 308 residues: MSNYEALLKFNRKAVSKEMVQYLASTTASIIKIKKTNSMIDIALPAPPLTKFINRLIKHSNVQTPTLMATSVYLAKLRSIIPSNVYGIETTRHRIFLGCLILAAKTLNDSSPLNKHWAEYTDGLLILREVNTIERELLEYFDWDVTISTDDLITCLSPFLKPIKEEQLYKSQRDCRTLKNFSAQEKDIVNKTSISHSRSSSNMSIPSLASTSTLSTLESRRSNLSNYSNRIRTLPELHESNNISDKFSPRTYNIDSKHDNKENRPIPTIKPFNFSKARPVILKTGLNKQIIKEDTKVKKSNWSNYFKS.

The Cyclin N-terminal domain occupies 18–146; sequence EMVQYLASTT…LLEYFDWDVT (129 aa). A disordered region spans residues 248-270; it reads SPRTYNIDSKHDNKENRPIPTIK. Basic and acidic residues predominate over residues 255 to 264; that stretch reads DSKHDNKENR.

The protein belongs to the cyclin family. PCL1,2 subfamily. As to quaternary structure, forms a cyclin-CDK complex with PHO85. Interacts with RVS167.

The protein localises to the cytoplasm. It is found in the nucleus. Functionally, G1/S-specific cyclin partner of the cyclin-dependent kinase (CDK) PHO85. Essential for the control of the cell cycle at the G1/S (start) transition. Together with cyclin PCL1, positively controls degradation of sphingoid long chain base kinase LCB4. The PCL2-PHO85 cyclin-CDK holoenzyme phosphorylates LCB4, which is required for its ubiquitination and degradation. PCL2-PHO85 also phosphorylates RVS167, linking cyclin-CDK activity with organization of the actin cytoskeleton. The sequence is that of PHO85 cyclin-2 (PCL2) from Saccharomyces cerevisiae (strain ATCC 204508 / S288c) (Baker's yeast).